A 182-amino-acid chain; its full sequence is MDPLMAHQRAQDAFAALLANVRADQLGGPTPCSEWTINDLIEHVVGGNEQVGRWAASPIEPPARPDGLVAAHQAAAAVAHEIFAAPGGMSATFKLPLGEVPGQVFIGLRTTDVLTHAWDLAAATGQSTDLDPELAVERLAAARALVGPQFRGPGKPFADEKPCPRERPPADQLAAFLGRTVR.

Positions 151–172 (RGPGKPFADEKPCPRERPPADQ) are disordered. A compositionally biased stretch (basic and acidic residues) spans 157-169 (FADEKPCPRERPP).

This is an uncharacterized protein from Mycobacterium tuberculosis (strain CDC 1551 / Oshkosh).